Consider the following 406-residue polypeptide: Nicotinate phosphoribosyltransferase (406 aa).

His226 carries the phosphohistidine; by autocatalysis modification.

This sequence belongs to the NAPRTase family. In terms of processing, transiently phosphorylated on a His residue during the reaction cycle. Phosphorylation strongly increases the affinity for substrates and increases the rate of nicotinate D-ribonucleotide production. Dephosphorylation regenerates the low-affinity form of the enzyme, leading to product release.

It catalyses the reaction nicotinate + 5-phospho-alpha-D-ribose 1-diphosphate + ATP + H2O = nicotinate beta-D-ribonucleotide + ADP + phosphate + diphosphate. It functions in the pathway cofactor biosynthesis; NAD(+) biosynthesis; nicotinate D-ribonucleotide from nicotinate: step 1/1. In terms of biological role, catalyzes the synthesis of beta-nicotinate D-ribonucleotide from nicotinate and 5-phospho-D-ribose 1-phosphate at the expense of ATP. In Verminephrobacter eiseniae (strain EF01-2), this protein is Nicotinate phosphoribosyltransferase.